Consider the following 274-residue polypeptide: Ethanolamine ammonia-lyase small subunit (274 aa).

Adenosylcob(III)alamin is bound by residues V161, E182, and C211.

Belongs to the EutC family. The basic unit is a heterodimer which dimerizes to form tetramers. The heterotetramers trimerize; 6 large subunits form a core ring with 6 small subunits projecting outwards. Adenosylcob(III)alamin serves as cofactor.

It is found in the bacterial microcompartment. It carries out the reaction ethanolamine = acetaldehyde + NH4(+). The protein operates within amine and polyamine degradation; ethanolamine degradation. Its function is as follows. Catalyzes the deamination of various vicinal amino-alcohols to oxo compounds. Allows this organism to utilize ethanolamine as the sole source of nitrogen and carbon in the presence of external vitamin B12. The sequence is that of Ethanolamine ammonia-lyase small subunit from Pseudomonas fluorescens (strain ATCC BAA-477 / NRRL B-23932 / Pf-5).